Consider the following 93-residue polypeptide: DNA/RNA-binding protein Alba (93 aa).

Residue lysine 11 is modified to N6-acetyllysine.

It belongs to the histone-like Alba family. Post-translationally, acetylated. Acetylation at Lys-11 decreases DNA-binding affinity.

Its subcellular location is the cytoplasm. It localises to the chromosome. Functionally, binds double-stranded DNA tightly but without sequence specificity. Involved in DNA compaction. The chain is DNA/RNA-binding protein Alba from Pyrococcus horikoshii (strain ATCC 700860 / DSM 12428 / JCM 9974 / NBRC 100139 / OT-3).